Reading from the N-terminus, the 333-residue chain is Acetoin:2,6-dichlorophenolindophenol oxidoreductase subunit alpha (333 aa).

As to quaternary structure, tetramer of 2 alpha and 2 beta subunits. The cofactor is thiamine diphosphate.

It functions in the pathway ketone degradation; acetoin degradation. In terms of biological role, catalyzes the 2,6-dichlorophenolindophenol-dependent cleavage of acetoin into acetate and acetaldehyde. The alpha subunit is probably the catalytic subunit of the enzyme. The chain is Acetoin:2,6-dichlorophenolindophenol oxidoreductase subunit alpha (acoA) from Bacillus subtilis (strain 168).